Here is a 230-residue protein sequence, read N- to C-terminus: Protein UL16 (230 aa).

The first 26 residues, 1–26, serve as a signal peptide directing secretion; it reads MERRRGTVPLGWVFFVLCLSASSSCA. The Extracellular portion of the chain corresponds to 27-184; it reads VDLGSKSSNS…SVSADEELSA (158 aa). Asparagine 35, asparagine 41, asparagine 68, asparagine 84, asparagine 95, asparagine 101, asparagine 132, and asparagine 145 each carry an N-linked (GlcNAc...) asparagine; by host glycan. A helical transmembrane segment spans residues 185-205; the sequence is TLARDIVLVSAITLFFFLLAL. Topologically, residues 206-230 are cytoplasmic; that stretch reads RIPQRLCQRLRIRLPHRYQRLRTED.

The protein belongs to the HHV-5 UL16 protein family. In terms of assembly, interacts with host ULBP1, ULBP2 and MICB.

It is found in the host membrane. Functionally, plays a role in escape from host immune response. Blocks the interaction between the host KLRK1 receptor with the ligands ULBP1 and ULBP2. ULBPs activate multiple signaling pathways in primary NK cells, resulting in the production of cytokines and chemokines. The sequestration of diverse KLRK1 ligands in the endoplasmic reticulum and cis-Golgi apparatus of cells by UL16 inhibits the activation of NK cells. This is Protein UL16 (UL16) from Human cytomegalovirus (strain AD169) (HHV-5).